The sequence spans 240 residues: Ribonuclease 3 (240 aa).

Residues 10–136 (VREFQETVGV…LIGAVYLDRG (127 aa)) form the RNase III domain. Residue glutamate 49 participates in Mg(2+) binding. Aspartate 53 is a catalytic residue. Residues aspartate 122 and glutamate 125 each coordinate Mg(2+). Residue glutamate 125 is part of the active site. Residues 163–231 (DWKTSLQELT…AESAWKAIRA (69 aa)) form the DRBM domain. The disordered stretch occupies residues 205 to 240 (TYGSGEGRSKKEAEQQAAESAWKAIRAATEKAKQES). Low complexity predominate over residues 219–228 (QQAAESAWKA).

This sequence belongs to the ribonuclease III family. Homodimer. Mg(2+) is required as a cofactor.

It localises to the cytoplasm. It carries out the reaction Endonucleolytic cleavage to 5'-phosphomonoester.. Its function is as follows. Digests double-stranded RNA. Involved in the processing of primary rRNA transcript to yield the immediate precursors to the large and small rRNAs (23S and 16S). Processes some mRNAs, and tRNAs when they are encoded in the rRNA operon. Processes pre-crRNA and tracrRNA of type II CRISPR loci if present in the organism. This chain is Ribonuclease 3, found in Thermobifida fusca (strain YX).